Here is an 876-residue protein sequence, read N- to C-terminus: Alanine--tRNA ligase (876 aa).

H564, H568, C666, and H670 together coordinate Zn(2+).

Belongs to the class-II aminoacyl-tRNA synthetase family. It depends on Zn(2+) as a cofactor.

The protein localises to the cytoplasm. The enzyme catalyses tRNA(Ala) + L-alanine + ATP = L-alanyl-tRNA(Ala) + AMP + diphosphate. Catalyzes the attachment of alanine to tRNA(Ala) in a two-step reaction: alanine is first activated by ATP to form Ala-AMP and then transferred to the acceptor end of tRNA(Ala). Also edits incorrectly charged Ser-tRNA(Ala) and Gly-tRNA(Ala) via its editing domain. The polypeptide is Alanine--tRNA ligase (Colwellia psychrerythraea (strain 34H / ATCC BAA-681) (Vibrio psychroerythus)).